We begin with the raw amino-acid sequence, 490 residues long: Aspartyl/glutamyl-tRNA(Asn/Gln) amidotransferase subunit B (490 aa).

Belongs to the GatB/GatE family. GatB subfamily. Heterotrimer of A, B and C subunits.

The enzyme catalyses L-glutamyl-tRNA(Gln) + L-glutamine + ATP + H2O = L-glutaminyl-tRNA(Gln) + L-glutamate + ADP + phosphate + H(+). It catalyses the reaction L-aspartyl-tRNA(Asn) + L-glutamine + ATP + H2O = L-asparaginyl-tRNA(Asn) + L-glutamate + ADP + phosphate + 2 H(+). Functionally, allows the formation of correctly charged Asn-tRNA(Asn) or Gln-tRNA(Gln) through the transamidation of misacylated Asp-tRNA(Asn) or Glu-tRNA(Gln) in organisms which lack either or both of asparaginyl-tRNA or glutaminyl-tRNA synthetases. The reaction takes place in the presence of glutamine and ATP through an activated phospho-Asp-tRNA(Asn) or phospho-Glu-tRNA(Gln). The protein is Aspartyl/glutamyl-tRNA(Asn/Gln) amidotransferase subunit B of Methylorubrum populi (strain ATCC BAA-705 / NCIMB 13946 / BJ001) (Methylobacterium populi).